Consider the following 149-residue polypeptide: Calmodulin-1 (149 aa).

EF-hand domains are found at residues 8–43 (EQIS…LGQN), 44–79 (PTEA…KMKD), 81–116 (DSEE…LGEK), and 117–149 (LTDE…MMAK). Ca(2+) contacts are provided by D21, D23, D25, C27, E32, D57, D59, N61, T63, E68, D94, D96, N98, E105, D130, D132, D134, Q136, and E141.

This sequence belongs to the calmodulin family. In terms of assembly, interacts with ZAR1 (via CaMBD domain). Binds to IQD1. Binds to MEE62 in a calcium-dependent manner.

It localises to the cytoplasm. It is found in the cell membrane. Calmodulin mediates the control of a large number of enzymes, ion channels and other proteins by Ca(2+). Among the enzymes to be stimulated by the calmodulin-Ca(2+) complex are a number of protein kinases and phosphatases. This is Calmodulin-1 (CAM1) from Arabidopsis thaliana (Mouse-ear cress).